The sequence spans 207 residues: MSTRGNLFIVSAPSGAGKSSLISTLLKDKPSDKQVSVSHTTRKPRPGEVDGQHYHFITVEQFKALIAQNAFIEWAEVFGNFYGTSKLVIEQTLDKGIDVFLDIDWQGAEQVKKLMETAIGVFILPPSKAELERRLTGRGQDSQQVIDSRMAQAVSEMSHYAQYEFIIVNDDFDNALADLSAIIRSQRLTCASQQHAQNDMIVDLLAD.

The Guanylate kinase-like domain maps to 5–184 (GNLFIVSAPS…ALADLSAIIR (180 aa)). 12 to 19 (APSGAGKS) contributes to the ATP binding site. Residues 30-49 (PSDKQVSVSHTTRKPRPGEV) form a disordered region.

This sequence belongs to the guanylate kinase family.

It localises to the cytoplasm. It catalyses the reaction GMP + ATP = GDP + ADP. Essential for recycling GMP and indirectly, cGMP. The sequence is that of Guanylate kinase from Shewanella frigidimarina (strain NCIMB 400).